The following is a 173-amino-acid chain: Shikimate kinase (173 aa).

Residue glycine 14–threonine 19 coordinates ATP. A Mg(2+)-binding site is contributed by serine 18. 3 residues coordinate substrate: aspartate 36, arginine 60, and glycine 82. Arginine 120 serves as a coordination point for ATP. Arginine 140 contacts substrate. Position 157 (glutamine 157) interacts with ATP.

This sequence belongs to the shikimate kinase family. Monomer. Mg(2+) is required as a cofactor.

Its subcellular location is the cytoplasm. The enzyme catalyses shikimate + ATP = 3-phosphoshikimate + ADP + H(+). Its pathway is metabolic intermediate biosynthesis; chorismate biosynthesis; chorismate from D-erythrose 4-phosphate and phosphoenolpyruvate: step 5/7. Catalyzes the specific phosphorylation of the 3-hydroxyl group of shikimic acid using ATP as a cosubstrate. This is Shikimate kinase from Buchnera aphidicola subsp. Acyrthosiphon pisum (strain APS) (Acyrthosiphon pisum symbiotic bacterium).